The chain runs to 359 residues: 4-hydroxy-3-methylbut-2-en-1-yl diphosphate synthase (flavodoxin) (359 aa).

[4Fe-4S] cluster is bound by residues Cys263, Cys266, Cys298, and Glu305.

Belongs to the IspG family. [4Fe-4S] cluster is required as a cofactor.

The enzyme catalyses (2E)-4-hydroxy-3-methylbut-2-enyl diphosphate + oxidized [flavodoxin] + H2O + 2 H(+) = 2-C-methyl-D-erythritol 2,4-cyclic diphosphate + reduced [flavodoxin]. Its pathway is isoprenoid biosynthesis; isopentenyl diphosphate biosynthesis via DXP pathway; isopentenyl diphosphate from 1-deoxy-D-xylulose 5-phosphate: step 5/6. Its function is as follows. Converts 2C-methyl-D-erythritol 2,4-cyclodiphosphate (ME-2,4cPP) into 1-hydroxy-2-methyl-2-(E)-butenyl 4-diphosphate. The polypeptide is 4-hydroxy-3-methylbut-2-en-1-yl diphosphate synthase (flavodoxin) (Wolinella succinogenes (strain ATCC 29543 / DSM 1740 / CCUG 13145 / JCM 31913 / LMG 7466 / NCTC 11488 / FDC 602W) (Vibrio succinogenes)).